Here is a 323-residue protein sequence, read N- to C-terminus: Breast cancer metastasis-suppressor 1-like protein-A (323 aa).

Residues 1 to 15 (MPVHSREKKESNHEE) show a composition bias toward basic and acidic residues. The segment at 1–52 (MPVHSREKKESNHEEMEVDFAEQEGSSSEDEDTESSSVSEDGESSEMDDEDC) is disordered. Positions 16-51 (MEVDFAEQEGSSSEDEDTESSSVSEDGESSEMDDED) are enriched in acidic residues. 2 coiled-coil regions span residues 50-81 (EDCERRRMECIDEMTNLEKQFTDLKDQLYKER) and 156-178 (QTELEEKIRRLEEDRHSIDITSE).

Belongs to the BRMS1 family.

The protein resides in the nucleus. In terms of biological role, involved in the histone deacetylase (HDAC1)-dependent transcriptional repression activity. In Danio rerio (Zebrafish), this protein is Breast cancer metastasis-suppressor 1-like protein-A (brms1la).